Here is a 136-residue protein sequence, read N- to C-terminus: MAKKAGSKLPKRKEEFTYRGYRVSELAKMRLEEIAELLPSRQRRTLRRGLSKEHRKFMAKLRARGTAKTHLRDAIVLPEMVGKVVEIHNGKTFQRVEIIPEMIGHYLGEYALTRARVIHGAAGVGATRSSKFVPLK.

Belongs to the universal ribosomal protein uS19 family.

In terms of biological role, protein S19 forms a complex with S13 that binds strongly to the 16S ribosomal RNA. The chain is Small ribosomal subunit protein uS19 from Methanothrix thermoacetophila (strain DSM 6194 / JCM 14653 / NBRC 101360 / PT) (Methanosaeta thermophila).